The sequence spans 212 residues: Thymidylate kinase (212 aa).

G10–T17 provides a ligand contact to ATP.

The protein belongs to the thymidylate kinase family.

The catalysed reaction is dTMP + ATP = dTDP + ADP. Functionally, phosphorylation of dTMP to form dTDP in both de novo and salvage pathways of dTTP synthesis. The sequence is that of Thymidylate kinase from Cronobacter sakazakii (strain ATCC BAA-894) (Enterobacter sakazakii).